Here is a 676-residue protein sequence, read N- to C-terminus: Pre-mRNA-splicing factor clf1 (676 aa).

HAT repeat units follow at residues 52–84 (EYQG…WELE), 86–118 (KEFR…SEMR), 120–152 (RNIN…MEET), 154–185 (GNIQ…LEKR), 187–218 (NEFE…FEEE), 220–255 (GTSD…FEAK), 257–291 (KEYE…FEKQ), 301–333 (VILS…LEET), 335–369 (GDPD…LWIF), 379–415 (KDVD…FDIR), 417–448 (MDLQ…LERQ), 450–482 (FEFV…LERG), 484–518 (DDSE…FEEY), and 520–551 (GEYD…FEIN). A compositionally biased stretch (acidic residues) spans 554 to 566 (EEEEEEEEEEEEE). Residues 554-573 (EEEEEEEEEEEEERPVSDEA) are disordered. An HAT 15 repeat occupies 572-610 (EAKRRARAVFERAHKVFKEKEMKEERVELLNAWRAFEHT).

This sequence belongs to the crooked-neck family. Associated with the spliceosome.

It is found in the nucleus. In terms of biological role, involved in pre-mRNA splicing and cell cycle progression. Required for the spliceosome assembly and initiation of the DNA replication. This chain is Pre-mRNA-splicing factor clf1 (clf1), found in Aspergillus fumigatus (strain ATCC MYA-4609 / CBS 101355 / FGSC A1100 / Af293) (Neosartorya fumigata).